The following is a 786-amino-acid chain: Polyribonucleotide nucleotidyltransferase (786 aa).

Asp-516 and Asp-522 together coordinate Mg(2+). The KH domain occupies 582-641; that stretch reads PRVTTVKIPVDKIGMVIGPKGQTINAIQDETGAEISIEDDGTIYVGATNGPSAQAAVERV. In terms of domain architecture, S1 motif spans 653–722; the sequence is GDRFLGTVVK…QRGKIYLDKV (70 aa). The tract at residues 722 to 786 is disordered; sequence VRPEGAEGPA…SRPRRRTRHS (65 aa). Residues 727–738 show a composition bias toward low complexity; the sequence is AEGPAEAAATDR. A compositionally biased stretch (basic and acidic residues) spans 739–778; the sequence is PAGRDRGDRAPRDRGDRGDRERGSRGPDRGDGGEGGGESR.

The protein belongs to the polyribonucleotide nucleotidyltransferase family. Requires Mg(2+) as cofactor.

Its subcellular location is the cytoplasm. It carries out the reaction RNA(n+1) + phosphate = RNA(n) + a ribonucleoside 5'-diphosphate. In terms of biological role, involved in mRNA degradation. Catalyzes the phosphorolysis of single-stranded polyribonucleotides processively in the 3'- to 5'-direction. The chain is Polyribonucleotide nucleotidyltransferase from Salinispora arenicola (strain CNS-205).